Consider the following 542-residue polypeptide: Thermosome subunit (542 aa).

The protein belongs to the TCP-1 chaperonin family. In terms of assembly, forms an oligomeric complex of eight-membered rings.

In terms of biological role, molecular chaperone; binds unfolded polypeptides in vitro, and has a weak ATPase activity. This chain is Thermosome subunit (ths), found in Methanocaldococcus jannaschii (strain ATCC 43067 / DSM 2661 / JAL-1 / JCM 10045 / NBRC 100440) (Methanococcus jannaschii).